A 91-amino-acid polypeptide reads, in one-letter code: Small ribosomal subunit protein uS15 (91 aa).

It belongs to the universal ribosomal protein uS15 family. As to quaternary structure, part of the 30S ribosomal subunit. Forms a bridge to the 50S subunit in the 70S ribosome, contacting the 23S rRNA.

In terms of biological role, one of the primary rRNA binding proteins, it binds directly to 16S rRNA where it helps nucleate assembly of the platform of the 30S subunit by binding and bridging several RNA helices of the 16S rRNA. Functionally, forms an intersubunit bridge (bridge B4) with the 23S rRNA of the 50S subunit in the ribosome. This chain is Small ribosomal subunit protein uS15, found in Cytophaga hutchinsonii (strain ATCC 33406 / DSM 1761 / CIP 103989 / NBRC 15051 / NCIMB 9469 / D465).